The primary structure comprises 117 residues: Large ribosomal subunit protein uL22 (117 aa).

The protein belongs to the universal ribosomal protein uL22 family. In terms of assembly, part of the 50S ribosomal subunit.

This protein binds specifically to 23S rRNA; its binding is stimulated by other ribosomal proteins, e.g. L4, L17, and L20. It is important during the early stages of 50S assembly. It makes multiple contacts with different domains of the 23S rRNA in the assembled 50S subunit and ribosome. Its function is as follows. The globular domain of the protein is located near the polypeptide exit tunnel on the outside of the subunit, while an extended beta-hairpin is found that lines the wall of the exit tunnel in the center of the 70S ribosome. This chain is Large ribosomal subunit protein uL22, found in Lactobacillus helveticus (strain DPC 4571).